The sequence spans 200 residues: Holliday junction resolvase RecU (200 aa).

A disordered region spans residues 1 to 27; that stretch reads MALKYPSGKEYRGNKPNAARRPAADYA. Positions 84, 86, 99, and 118 each coordinate Mg(2+).

It belongs to the RecU family. Homodimer. Mg(2+) serves as cofactor.

It is found in the cytoplasm. The enzyme catalyses Endonucleolytic cleavage at a junction such as a reciprocal single-stranded crossover between two homologous DNA duplexes (Holliday junction).. In terms of biological role, endonuclease that resolves Holliday junction intermediates in genetic recombination. Cleaves mobile four-strand junctions by introducing symmetrical nicks in paired strands. Promotes annealing of linear ssDNA with homologous dsDNA. Required for DNA repair, homologous recombination and chromosome segregation. The chain is Holliday junction resolvase RecU from Geobacillus kaustophilus (strain HTA426).